The following is a 187-amino-acid chain: Holliday junction branch migration complex subunit RuvA (187 aa).

Residues methionine 1–lysine 64 form a domain I region. The segment at arginine 65–valine 136 is domain II. Residues valine 136 to proline 139 form a flexible linker region. Residues lysine 140–lysine 187 form a domain III region.

The protein belongs to the RuvA family. Homotetramer. Forms an RuvA(8)-RuvB(12)-Holliday junction (HJ) complex. HJ DNA is sandwiched between 2 RuvA tetramers; dsDNA enters through RuvA and exits via RuvB. An RuvB hexamer assembles on each DNA strand where it exits the tetramer. Each RuvB hexamer is contacted by two RuvA subunits (via domain III) on 2 adjacent RuvB subunits; this complex drives branch migration. In the full resolvosome a probable DNA-RuvA(4)-RuvB(12)-RuvC(2) complex forms which resolves the HJ.

It localises to the cytoplasm. In terms of biological role, the RuvA-RuvB-RuvC complex processes Holliday junction (HJ) DNA during genetic recombination and DNA repair, while the RuvA-RuvB complex plays an important role in the rescue of blocked DNA replication forks via replication fork reversal (RFR). RuvA specifically binds to HJ cruciform DNA, conferring on it an open structure. The RuvB hexamer acts as an ATP-dependent pump, pulling dsDNA into and through the RuvAB complex. HJ branch migration allows RuvC to scan DNA until it finds its consensus sequence, where it cleaves and resolves the cruciform DNA. This Caldanaerobacter subterraneus subsp. tengcongensis (strain DSM 15242 / JCM 11007 / NBRC 100824 / MB4) (Thermoanaerobacter tengcongensis) protein is Holliday junction branch migration complex subunit RuvA.